Consider the following 122-residue polypeptide: Large ribosomal subunit protein uL14 (122 aa).

Belongs to the universal ribosomal protein uL14 family. In terms of assembly, part of the 50S ribosomal subunit. Forms a cluster with proteins L3 and L19. In the 70S ribosome, L14 and L19 interact and together make contacts with the 16S rRNA in bridges B5 and B8.

Its function is as follows. Binds to 23S rRNA. Forms part of two intersubunit bridges in the 70S ribosome. This chain is Large ribosomal subunit protein uL14, found in Methylobacterium radiotolerans (strain ATCC 27329 / DSM 1819 / JCM 2831 / NBRC 15690 / NCIMB 10815 / 0-1).